We begin with the raw amino-acid sequence, 960 residues long: Semaphorin-6C (960 aa).

A signal peptide spans 1–23 (MPRAPHSMPLLLLLLLSLPQAQT). Over 24–635 (AFPQDPIPLL…ASASRSIPIP (612 aa)) the chain is Extracellular. The Sema domain occupies 29–515 (PIPLLTSDLQ…FPGCIVYLSL (487 aa)). N-linked (GlcNAc...) asparagine glycosylation occurs at Asn-69. Cystine bridges form between Cys-110/Cys-120, Cys-138/Cys-147, Cys-261/Cys-372, and Cys-286/Cys-331. The N-linked (GlcNAc...) asparagine glycan is linked to Asn-285. A glycan (N-linked (GlcNAc...) asparagine) is linked at Asn-436. Intrachain disulfides connect Cys-478/Cys-509, Cys-518/Cys-536, Cys-524/Cys-569, and Cys-528/Cys-544. Residues 555 to 624 (VDLTGNQESM…HTQGVRRDLS (70 aa)) form a disordered region. A helical transmembrane segment spans residues 636 to 656 (LLLACVAAAFALGASVSGLLV). The Cytoplasmic portion of the chain corresponds to 657–960 (SCACRRANRR…PAPHGSHFNF (304 aa)). Disordered regions lie at residues 685-725 (LARL…SPPE), 745-792 (ASGG…PGQE), and 806-960 (HGPQ…HFNF). A compositionally biased stretch (low complexity) spans 899 to 909 (RVPSGGPSRYS). The span at 922-935 (PDGHRGRSLKRVDV) shows a compositional bias: basic and acidic residues. Pro residues predominate over residues 940–952 (SPKPPLATPPQPA).

Belongs to the semaphorin family. As to expression, expressed in many regions of the developing nervous system, probably in neurons and their precursors, but also in nonneural tissue such as immature muscle and dermis. In adult, strong expression in the skeletal muscle and moderate expression in the brain, where cerebellum shows the highest expression. Also expressed in almost all areas of the CNS.

Its subcellular location is the cell membrane. In terms of biological role, shows growth cone collapsing activity on dorsal root ganglion (DRG) neurons in vitro. May be a stop signal for the DRG neurons in their target areas, and possibly also for other neurons. May also be involved in the maintenance and remodeling of neuronal connections. The sequence is that of Semaphorin-6C (Sema6c) from Rattus norvegicus (Rat).